The sequence spans 290 residues: uncharacterized protein (290 aa).

Disordered stretches follow at residues 1-98 (MLGQ…SRRV) and 209-236 (LSGQ…AATT). The span at 63 to 76 (KPDRVRPGQRDRIG) shows a compositional bias: basic and acidic residues. Residues 87-97 (AGQARAASSRR) show a composition bias toward low complexity. Residues 261 to 281 (CILTALLAVSFHSIGVVIMTS) form a helical membrane-spanning segment.

It is found in the membrane. This is an uncharacterized protein from Homo sapiens (Human).